A 386-amino-acid polypeptide reads, in one-letter code: Succinate--CoA ligase [ADP-forming] subunit beta (386 aa).

Residues 9–244 (KAVLRSYGVS…LDEEDAKEIE (236 aa)) form the ATP-grasp domain. ATP contacts are provided by residues Lys-46, 53-55 (GRG), Glu-99, Cys-102, and Glu-107. Positions 199 and 213 each coordinate Mg(2+). Residues Asn-264 and 321 to 323 (GIM) contribute to the substrate site.

This sequence belongs to the succinate/malate CoA ligase beta subunit family. In terms of assembly, heterotetramer of two alpha and two beta subunits. Requires Mg(2+) as cofactor.

The enzyme catalyses succinate + ATP + CoA = succinyl-CoA + ADP + phosphate. It catalyses the reaction GTP + succinate + CoA = succinyl-CoA + GDP + phosphate. The protein operates within carbohydrate metabolism; tricarboxylic acid cycle; succinate from succinyl-CoA (ligase route): step 1/1. Its function is as follows. Succinyl-CoA synthetase functions in the citric acid cycle (TCA), coupling the hydrolysis of succinyl-CoA to the synthesis of either ATP or GTP and thus represents the only step of substrate-level phosphorylation in the TCA. The beta subunit provides nucleotide specificity of the enzyme and binds the substrate succinate, while the binding sites for coenzyme A and phosphate are found in the alpha subunit. The polypeptide is Succinate--CoA ligase [ADP-forming] subunit beta (Bacillus anthracis (strain A0248)).